The following is a 440-amino-acid chain: Transposon Ty1-ER2 Gag polyprotein (440 aa).

3 stretches are compositionally biased toward polar residues: residues 1 to 10 (MESQQLSNYP), 48 to 60 (TKANSQQTTTPAS), and 127 to 152 (QSQFPQYPSSVGTPLSTPSPESGNTF). 3 disordered regions span residues 1–93 (MESQ…MMTQ), 126–173 (PQSQ…RPPP), and 352–440 (GSRN…PETY). Residues 153-165 (TDSSSADSDMTST) show a composition bias toward low complexity. The tract at residues 299-401 (NNGIHINNKV…NSKSKTARAH (103 aa)) is RNA-binding. A compositionally biased stretch (low complexity) spans 402-418 (NVSTSNNSPSTDNDSIS). At serine 416 the chain carries Phosphoserine. Polar residues predominate over residues 419 to 428 (KSTTEPIQLN). Residues 429-440 (NKHDLHLRPETY) show a composition bias toward basic and acidic residues.

As to quaternary structure, homotrimer.

The protein localises to the cytoplasm. Capsid protein (CA) is the structural component of the virus-like particle (VLP), forming the shell that encapsulates the retrotransposons dimeric RNA genome. The particles are assembled from trimer-clustered units and there are holes in the capsid shells that allow for the diffusion of macromolecules. CA also has nucleocapsid-like chaperone activity, promoting primer tRNA(i)-Met annealing to the multipartite primer-binding site (PBS), dimerization of Ty1 RNA and initiation of reverse transcription. This is Transposon Ty1-ER2 Gag polyprotein (TY1A-ER2) from Saccharomyces cerevisiae (strain ATCC 204508 / S288c) (Baker's yeast).